The primary structure comprises 357 residues: Quinolinate synthase (357 aa).

Iminosuccinate contacts are provided by H50 and S71. C116 serves as a coordination point for [4Fe-4S] cluster. Iminosuccinate contacts are provided by residues Y142–N144 and S159. C203 serves as a coordination point for [4Fe-4S] cluster. Residues H229 to E231 and T246 contribute to the iminosuccinate site. Residue C300 participates in [4Fe-4S] cluster binding.

The protein belongs to the quinolinate synthase family. Type 1 subfamily. [4Fe-4S] cluster serves as cofactor.

It localises to the cytoplasm. It carries out the reaction iminosuccinate + dihydroxyacetone phosphate = quinolinate + phosphate + 2 H2O + H(+). The protein operates within cofactor biosynthesis; NAD(+) biosynthesis; quinolinate from iminoaspartate: step 1/1. In terms of biological role, catalyzes the condensation of iminoaspartate with dihydroxyacetone phosphate to form quinolinate. In Shewanella sp. (strain MR-4), this protein is Quinolinate synthase.